Reading from the N-terminus, the 44-residue chain is Protein PsbN (44 aa).

The chain crosses the membrane as a helical span at residues 6 to 26 (FFFTIFVWFLLISVTGYSIYV).

The protein belongs to the PsbN family.

The protein resides in the plastid. It localises to the chloroplast thylakoid membrane. Its function is as follows. May play a role in photosystem I and II biogenesis. This Bigelowiella natans (Pedinomonas minutissima) protein is Protein PsbN.